Here is an 83-residue protein sequence, read N- to C-terminus: Toxin AahP985 (83 aa).

The first 18 residues, 1–18, serve as a signal peptide directing secretion; that stretch reads MNYLVMISLALLIAGVDS. Residues 20–82 enclose the LCN-type CS-alpha/beta domain; sequence RDAYIAKNDN…VPIKLSGECH (63 aa). Cystine bridges form between Cys-30–Cys-81, Cys-34–Cys-54, Cys-40–Cys-64, and Cys-44–Cys-66.

The protein belongs to the long (4 C-C) scorpion toxin superfamily. Sodium channel inhibitor family. Alpha subfamily. Expressed by the venom gland.

It localises to the secreted. Its function is as follows. Binds voltage-independently at site-3 of sodium channels (Nav) and inhibits the inactivation of the activated channels, thereby blocking neuronal transmission. The polypeptide is Toxin AahP985 (Androctonus australis (Sahara scorpion)).